The following is a 58-amino-acid chain: Large ribosomal subunit protein uL30 (58 aa).

Belongs to the universal ribosomal protein uL30 family. As to quaternary structure, part of the 50S ribosomal subunit.

In Phocaeicola vulgatus (strain ATCC 8482 / DSM 1447 / JCM 5826 / CCUG 4940 / NBRC 14291 / NCTC 11154) (Bacteroides vulgatus), this protein is Large ribosomal subunit protein uL30.